Here is a 383-residue protein sequence, read N- to C-terminus: uncharacterized protein (383 aa).

Residues Cys12, Cys18, Cys21, and Cys88 each contribute to the [4Fe-4S] cluster site. Positions 219, 246, 267, and 314 each coordinate S-adenosyl-L-methionine. Residue Cys341 is the Nucleophile of the active site.

It belongs to the class I-like SAM-binding methyltransferase superfamily. RNA M5U methyltransferase family.

This is an uncharacterized protein from Protochlamydia amoebophila (strain UWE25).